The primary structure comprises 82 residues: ATP synthase subunit c, chloroplastic (82 aa).

2 consecutive transmembrane segments (helical) span residues 3 to 23 (PLIA…ASIG) and 57 to 77 (LAFM…LLFA).

Belongs to the ATPase C chain family. F-type ATPases have 2 components, F(1) - the catalytic core - and F(0) - the membrane proton channel. F(1) has five subunits: alpha(3), beta(3), gamma(1), delta(1), epsilon(1). F(0) has four main subunits: a(1), b(1), b'(1) and c(10-14). The alpha and beta chains form an alternating ring which encloses part of the gamma chain. F(1) is attached to F(0) by a central stalk formed by the gamma and epsilon chains, while a peripheral stalk is formed by the delta, b and b' chains.

It localises to the plastid. The protein localises to the chloroplast thylakoid membrane. F(1)F(0) ATP synthase produces ATP from ADP in the presence of a proton or sodium gradient. F-type ATPases consist of two structural domains, F(1) containing the extramembraneous catalytic core and F(0) containing the membrane proton channel, linked together by a central stalk and a peripheral stalk. During catalysis, ATP synthesis in the catalytic domain of F(1) is coupled via a rotary mechanism of the central stalk subunits to proton translocation. Its function is as follows. Key component of the F(0) channel; it plays a direct role in translocation across the membrane. A homomeric c-ring of between 10-14 subunits forms the central stalk rotor element with the F(1) delta and epsilon subunits. This chain is ATP synthase subunit c, chloroplastic, found in Nephroselmis olivacea (Green alga).